The chain runs to 333 residues: Nucleoid-associated protein PSPPH_1145 (333 aa).

The protein belongs to the YejK family.

It is found in the cytoplasm. It localises to the nucleoid. The protein is Nucleoid-associated protein PSPPH_1145 of Pseudomonas savastanoi pv. phaseolicola (strain 1448A / Race 6) (Pseudomonas syringae pv. phaseolicola (strain 1448A / Race 6)).